We begin with the raw amino-acid sequence, 188 residues long: Transmembrane protein 160 (188 aa).

The N-terminal 96 residues, 1–96, are a transit peptide targeting the mitochondrion; it reads MGGGWWWARA…ISFMQSDMGR (96 aa). Residues 25–52 are disordered; the sequence is PPRPRSGGARGSFAPGHGPRAGASPPPV. The span at 29-38 shows a compositional bias: low complexity; that stretch reads RSGGARGSFA. Residue serine 48 is modified to Phosphoserine. Helical transmembrane passes span 102–122 and 135–155; these read FFLLGGLCVVWGGASYVVGLA and AAAGVGAVLAAGLLWACAVGL.

This sequence belongs to the TMEM160 family.

The protein localises to the mitochondrion inner membrane. In Bos taurus (Bovine), this protein is Transmembrane protein 160.